The primary structure comprises 195 residues: Transcriptional regulator GfcR (195 aa).

This sequence belongs to the purine/pyrimidine phosphoribosyltransferase family. GfcR subfamily.

The polypeptide is Transcriptional regulator GfcR (Archaeoglobus fulgidus (strain ATCC 49558 / DSM 4304 / JCM 9628 / NBRC 100126 / VC-16)).